The following is a 427-amino-acid chain: MTAASRANPYSIVSSEEDGLHLVTMSGANGFGNGKVHTRRRCRNRFVKKNGQCNIEFANMDEKSQRYLADMFTTCVDIRWRYMLLIFSLAFLASWLLFGIIFWVIAVAHGDLEPAEGRGRTPCVLQVHGFMAAFLFSIETQTTIGYGLRCVTEECPVAVFMVVAQSIVGCIIDSFMIGAIMAKMARPKKRAQTLLFSHNAVVALRDGKLCLMWRVGNLRKSHIVEAHVRAQLIKPRVTEEGEYIPLDQIDIDVGFDKGLDRIFLVSPITILHEIDEASPLFGISRQDLETDDFEIVVILEGMVEATAMTTQARSSYLANEILWGHRFEPVLFEEKNQYKIDYSHFHKTYEVPSTPRCSAKDLVENKFLLPSANSFCYENELAFLSRDEEDEVATDRDGRSPQPEHDFDRLQASSAALERPYRRESEI.

The Cytoplasmic segment spans residues 1-77 (MTAASRANPY…LADMFTTCVD (77 aa)). Cys75 is modified (S-nitrosocysteine). A helical transmembrane segment spans residues 78-104 (IRWRYMLLIFSLAFLASWLLFGIIFWV). Residues Arg79 and Arg81 each coordinate a 1,2-diacyl-sn-glycero-3-phospho-(1D-myo-inositol-4,5-bisphosphate). Residues 105 to 129 (IAVAHGDLEPAEGRGRTPCVLQVHG) are Extracellular-facing. A disulfide bond links Cys123 and Cys155. The helical; Pore-forming intramembrane region spans 130 to 146 (FMAAFLFSIETQTTIGY). K(+) contacts are provided by Thr143, Ile144, Gly145, and Tyr146. A Selectivity filter motif is present at residues 143–148 (TIGYGL). Residues 147–155 (GLRCVTEEC) are Extracellular-facing. The helical transmembrane segment at 156–183 (PVAVFMVVAQSIVGCIIDSFMIGAIMAK) threads the bilayer. Lys183 and Lys188 together coordinate a 1,2-diacyl-sn-glycero-3-phospho-(1D-myo-inositol-4,5-bisphosphate). Residues 184-427 (MARPKKRAQT…ERPYRRESEI (244 aa)) lie on the Cytoplasmic side of the membrane. The segment at 387-427 (DEEDEVATDRDGRSPQPEHDFDRLQASSAALERPYRRESEI) is disordered. Residues 393 to 409 (ATDRDGRSPQPEHDFDR) are compositionally biased toward basic and acidic residues. The short motif at 425 to 427 (SEI) is the PDZ-binding element.

Belongs to the inward rectifier-type potassium channel (TC 1.A.2.1) family. KCNJ12 subfamily. As to quaternary structure, homotetramer. Forms heteromer with KCNJ4. Can form heteromeric channels with Kir2.6/KCNJ18. Association, via its PDZ-recognition domain, with LIN7A, LIN7B, LIN7C, DLG1, CASK and APBA1 plays a key role in its localization and trafficking. As to expression, highest level in cerebellum.

The protein localises to the membrane. It is found in the cell membrane. It localises to the sarcolemma. The protein resides in the T-tubule. It carries out the reaction K(+)(in) = K(+)(out). Activated by phosphatidylinositol 4,5-biphosphate (PtdIns(4,5)P2). PtdIns(4,5)P2 binding to the cytoplasmic side of the channel triggers a conformation change leading to channel opening. Inhibited by Ba(2+). Inward rectifying potassium channel that probably participates in controlling the resting membrane potential in electrically excitable cells. It probably participates in establishing action potential waveform and excitability of neuronal and muscle tissues. Inward rectifier potassium channels are characterized by a greater tendency to allow potassium to flow into the cell rather than out of it. Their voltage dependence is regulated by the concentration of extracellular potassium; as external potassium is raised, the voltage range of the channel opening shifts to more positive voltages. The inward rectification is mainly due to the blockage of outward current by internal magnesium. The polypeptide is ATP-sensitive inward rectifier potassium channel 12 (Kcnj12) (Mus musculus (Mouse)).